Reading from the N-terminus, the 1798-residue chain is Focadhesin (1798 aa).

K816 carries the N6-acetyllysine modification.

In terms of assembly, interacts with VCL. In terms of tissue distribution, expressed by glial and neuronal cells in brain.

It localises to the cell junction. The protein resides in the focal adhesion. It is found in the cytoplasm. Its subcellular location is the cytosol. Required for the maintenance of SKIC2 and SKIC3 proteostatic levels in the liver. May be involved in the regulation of RNA degradation by the exosome complex. Potential tumor suppressor in gliomas. The sequence is that of Focadhesin (Focad) from Mus musculus (Mouse).